We begin with the raw amino-acid sequence, 332 residues long: Fructose-1,6-bisphosphatase class 1 (332 aa).

4 residues coordinate Mg(2+): E89, D110, L112, and D113. Residues 113–116 (DGSS), N206, Y239, 257–259 (YLY), and K269 each bind substrate. Residue E275 participates in Mg(2+) binding.

The protein belongs to the FBPase class 1 family. As to quaternary structure, homotetramer. It depends on Mg(2+) as a cofactor.

The protein localises to the cytoplasm. It catalyses the reaction beta-D-fructose 1,6-bisphosphate + H2O = beta-D-fructose 6-phosphate + phosphate. It participates in carbohydrate biosynthesis; gluconeogenesis. The sequence is that of Fructose-1,6-bisphosphatase class 1 from Citrobacter koseri (strain ATCC BAA-895 / CDC 4225-83 / SGSC4696).